A 120-amino-acid chain; its full sequence is Large ribosomal subunit protein bL12 (120 aa).

This sequence belongs to the bacterial ribosomal protein bL12 family. Homodimer. Part of the ribosomal stalk of the 50S ribosomal subunit. Forms a multimeric L10(L12)X complex, where L10 forms an elongated spine to which 2 to 4 L12 dimers bind in a sequential fashion. Binds GTP-bound translation factors.

In terms of biological role, forms part of the ribosomal stalk which helps the ribosome interact with GTP-bound translation factors. Is thus essential for accurate translation. The chain is Large ribosomal subunit protein bL12 from Listeria monocytogenes serovar 1/2a (strain ATCC BAA-679 / EGD-e).